A 550-amino-acid chain; its full sequence is Formate--tetrahydrofolate ligase (550 aa).

62-69 lines the ATP pocket; it reads TPAGEGKS.

Belongs to the formate--tetrahydrofolate ligase family.

It catalyses the reaction (6S)-5,6,7,8-tetrahydrofolate + formate + ATP = (6R)-10-formyltetrahydrofolate + ADP + phosphate. The protein operates within one-carbon metabolism; tetrahydrofolate interconversion. This is Formate--tetrahydrofolate ligase from Corynebacterium diphtheriae (strain ATCC 700971 / NCTC 13129 / Biotype gravis).